The following is a 98-amino-acid chain: NADH-ubiquinone oxidoreductase chain 4L (98 aa).

3 helical membrane-spanning segments follow: residues 1 to 21 (MSMVYINIFLAFILSFMGLLI), 30 to 50 (LLCLEGMMLSLFIMMTVTILT), and 61 to 81 (IILLVFAACEAALGLSLLVMI).

The protein belongs to the complex I subunit 4L family. As to quaternary structure, core subunit of respiratory chain NADH dehydrogenase (Complex I) which is composed of 45 different subunits.

The protein localises to the mitochondrion inner membrane. The enzyme catalyses a ubiquinone + NADH + 5 H(+)(in) = a ubiquinol + NAD(+) + 4 H(+)(out). Functionally, core subunit of the mitochondrial membrane respiratory chain NADH dehydrogenase (Complex I) which catalyzes electron transfer from NADH through the respiratory chain, using ubiquinone as an electron acceptor. Part of the enzyme membrane arm which is embedded in the lipid bilayer and involved in proton translocation. This Martes americana (American marten) protein is NADH-ubiquinone oxidoreductase chain 4L (MT-ND4L).